Here is a 356-residue protein sequence, read N- to C-terminus: 3-isopropylmalate dehydrogenase (356 aa).

Residues arginine 95, arginine 105, arginine 133, and aspartate 223 each contribute to the substrate site. Mg(2+) is bound by residues aspartate 223, aspartate 247, and aspartate 251. Residue 281–293 participates in NAD(+) binding; sequence GSAPDIAGQNKAN.

The protein belongs to the isocitrate and isopropylmalate dehydrogenases family. LeuB type 1 subfamily. Homodimer. Requires Mg(2+) as cofactor. It depends on Mn(2+) as a cofactor.

The protein resides in the cytoplasm. It carries out the reaction (2R,3S)-3-isopropylmalate + NAD(+) = 4-methyl-2-oxopentanoate + CO2 + NADH. Its pathway is amino-acid biosynthesis; L-leucine biosynthesis; L-leucine from 3-methyl-2-oxobutanoate: step 3/4. In terms of biological role, catalyzes the oxidation of 3-carboxy-2-hydroxy-4-methylpentanoate (3-isopropylmalate) to 3-carboxy-4-methyl-2-oxopentanoate. The product decarboxylates to 4-methyl-2 oxopentanoate. The sequence is that of 3-isopropylmalate dehydrogenase from Neisseria gonorrhoeae (strain ATCC 700825 / FA 1090).